The sequence spans 494 residues: 3-octaprenyl-4-hydroxybenzoate carboxy-lyase (494 aa).

Asparagine 172 provides a ligand contact to Mn(2+). Prenylated FMN contacts are provided by residues 175 to 177 (IYR), 189 to 191 (RWL), and 194 to 195 (RG). Glutamate 238 lines the Mn(2+) pocket. Aspartate 294 (proton donor) is an active-site residue.

It belongs to the UbiD family. As to quaternary structure, homohexamer. Prenylated FMN serves as cofactor. Mn(2+) is required as a cofactor.

Its subcellular location is the cell membrane. The catalysed reaction is a 4-hydroxy-3-(all-trans-polyprenyl)benzoate + H(+) = a 2-(all-trans-polyprenyl)phenol + CO2. It functions in the pathway cofactor biosynthesis; ubiquinone biosynthesis. Catalyzes the decarboxylation of 3-octaprenyl-4-hydroxy benzoate to 2-octaprenylphenol, an intermediate step in ubiquinone biosynthesis. This Albidiferax ferrireducens (strain ATCC BAA-621 / DSM 15236 / T118) (Rhodoferax ferrireducens) protein is 3-octaprenyl-4-hydroxybenzoate carboxy-lyase.